The following is a 381-amino-acid chain: Creatine kinase B-type (381 aa).

Position 4 is a phosphoserine (Ser-4). The Phosphagen kinase N-terminal domain maps to 11–98; that stretch reads KLRFPAEDEF…FDPIIEDRHG (88 aa). Thr-35 is subject to Phosphothreonine. Lys-45 is covalently cross-linked (Glycyl lysine isopeptide (Lys-Gly) (interchain with G-Cter in ubiquitin)). Val-72 is a creatine binding site. Residues 96 to 110 are compositionally biased toward basic and acidic residues; sequence RHGGYKPSDEHKTDL. The interval 96-123 is disordered; sequence RHGGYKPSDEHKTDLNPDNLQGGDDLDP. Residues Lys-101 and Lys-107 each participate in a glycyl lysine isopeptide (Lys-Gly) (interchain with G-Cter in ubiquitin) cross-link. A Phosphotyrosine modification is found at Tyr-125. In terms of domain architecture, Phosphagen kinase C-terminal spans 125–367; it reads YVLSSRVRTG…KLLIEMEQRL (243 aa). ATP-binding positions include 128 to 132, Arg-130, Arg-132, and His-191; that span reads SSRVR. The interval 130-138 is internal MTS-like signal; that stretch reads RVRTGRSIR. Residue Ser-199 is modified to Phosphoserine. Position 232 (Glu-232) interacts with creatine. Position 236 (Arg-236) interacts with ATP. Tyr-269 bears the 3'-nitrotyrosine mark. Ser-285 lines the creatine pocket. ATP-binding positions include Arg-292, Arg-320, 320-325, and Asp-335; that span reads RGTGGV. Phosphothreonine is present on Thr-322. A Glycyl lysine isopeptide (Lys-Gly) (interchain with G-Cter in ubiquitin) cross-link involves residue Lys-381.

It belongs to the ATP:guanido phosphotransferase family. As to quaternary structure, dimer of identical or non-identical chains, which can be either B (brain type) or M (muscle type). With MM being the major form in skeletal muscle and myocardium, MB existing in myocardium, and BB existing in many tissues, especially brain. Interacts with SLC12A6 (via C-terminus); the interaction may be required for SLC12A6 potassium-chloride cotransport activity. Post-translationally, ubiquitinated by the ECS(ASB9) complex, leading to its degradation by the proteasome.

Its subcellular location is the cytoplasm. It localises to the cytosol. The protein localises to the mitochondrion. The protein resides in the cell membrane. It carries out the reaction creatine + ATP = N-phosphocreatine + ADP + H(+). In terms of biological role, reversibly catalyzes the transfer of phosphate between ATP and various phosphogens (e.g. creatine phosphate). Creatine kinase isoenzymes play a central role in energy transduction in tissues with large, fluctuating energy demands, such as skeletal muscle, heart, brain and spermatozoa. Acts as a key regulator of adaptive thermogenesis as part of the futile creatine cycle: localizes to the mitochondria of thermogenic fat cells and acts by mediating phosphorylation of creatine to initiate a futile cycle of creatine phosphorylation and dephosphorylation. During the futile creatine cycle, creatine and N-phosphocreatine are in a futile cycle, which dissipates the high energy charge of N-phosphocreatine as heat without performing any mechanical or chemical work. In Canis lupus familiaris (Dog), this protein is Creatine kinase B-type (CKB).